We begin with the raw amino-acid sequence, 215 residues long: Cytochrome b6 (215 aa).

Residues 32-52 (IFYCLGGITLTCFLIQFATGF) form a helical membrane-spanning segment. Cys-35 contacts heme c. Heme b contacts are provided by His-86 and His-100. The next 3 helical transmembrane spans lie at 90–110 (ASMM…TGGF), 116–136 (LTWV…VTGY), and 186–206 (LHTF…FLMI). Heme b is bound by residues His-187 and His-202.

This sequence belongs to the cytochrome b family. PetB subfamily. The 4 large subunits of the cytochrome b6-f complex are cytochrome b6, subunit IV (17 kDa polypeptide, PetD), cytochrome f and the Rieske protein, while the 4 small subunits are PetG, PetL, PetM and PetN. The complex functions as a dimer. Heme b is required as a cofactor. It depends on heme c as a cofactor.

It localises to the cellular thylakoid membrane. Functionally, component of the cytochrome b6-f complex, which mediates electron transfer between photosystem II (PSII) and photosystem I (PSI), cyclic electron flow around PSI, and state transitions. The sequence is that of Cytochrome b6 from Synechococcus elongatus.